The following is a 249-amino-acid chain: Ubiquinone/menaquinone biosynthesis C-methyltransferase UbiE (249 aa).

Residues Thr72, Asp93, and 121 to 122 (DA) each bind S-adenosyl-L-methionine.

It belongs to the class I-like SAM-binding methyltransferase superfamily. MenG/UbiE family.

The catalysed reaction is a 2-demethylmenaquinol + S-adenosyl-L-methionine = a menaquinol + S-adenosyl-L-homocysteine + H(+). It catalyses the reaction a 2-methoxy-6-(all-trans-polyprenyl)benzene-1,4-diol + S-adenosyl-L-methionine = a 5-methoxy-2-methyl-3-(all-trans-polyprenyl)benzene-1,4-diol + S-adenosyl-L-homocysteine + H(+). It functions in the pathway quinol/quinone metabolism; menaquinone biosynthesis; menaquinol from 1,4-dihydroxy-2-naphthoate: step 2/2. Its pathway is cofactor biosynthesis; ubiquinone biosynthesis. Its function is as follows. Methyltransferase required for the conversion of demethylmenaquinol (DMKH2) to menaquinol (MKH2) and the conversion of 2-polyprenyl-6-methoxy-1,4-benzoquinol (DDMQH2) to 2-polyprenyl-3-methyl-6-methoxy-1,4-benzoquinol (DMQH2). In Teredinibacter turnerae (strain ATCC 39867 / T7901), this protein is Ubiquinone/menaquinone biosynthesis C-methyltransferase UbiE.